Reading from the N-terminus, the 199-residue chain is Early activation antigen CD69 (199 aa).

The disordered stretch occupies residues 1–29 (MSSENCFVAENSSLHPESGQENDATSPHF). The Cytoplasmic segment spans residues 1–40 (MSSENCFVAENSSLHPESGQENDATSPHFSTRHEGSFQVP). Residues 41–61 (VLCAVMNVVFITILIIALIAL) form a helical; Signal-anchor for type II membrane protein membrane-spanning segment. At 62–199 (SVGQYNCPGQ…LYWICNKPYK (138 aa)) the chain is on the extracellular side. Intrachain disulfides connect Cys-85–Cys-96, Cys-113–Cys-194, and Cys-173–Cys-186. One can recognise a C-type lectin domain in the interval 92 to 195 (YQRKCYFIST…CEKNLYWICN (104 aa)). N-linked (GlcNAc...) asparagine glycosylation is present at Asn-166.

In terms of assembly, homodimer; disulfide-linked. Interacts with S100A8 and S100A9. Interacts with galactin-1/LGALS1. Interacts with S1PR1; this interaction mediates S1PR1 degradation. Constitutive Ser/Thr phosphorylation in both mature thymocytes and activated T-lymphocytes. In terms of tissue distribution, expressed on the surface of activated T-cells, B-cells, natural killer cells, neutrophils, eosinophils, epidermal Langerhans cells and platelets.

It is found in the cell membrane. Its function is as follows. Transmembrane protein expressed mainly on T-cells resident in mucosa that plays an essential role in immune cell homeostasis. Rapidly expressed on the surface of platelets, T-lymphocytes and NK cells upon activation by various stimuli, such as antigen recognition or cytokine signaling, stimulates different signaling pathways in different cell types. Negatively regulates Th17 cell differentiation through its carbohydrate dependent interaction with galectin-1/LGALS1 present on immature dendritic cells. Association of CD69 cytoplasmic tail with the JAK3/STAT5 signaling pathway regulates the transcription of RORgamma/RORC and, consequently, differentiation toward the Th17 lineage. Also acts via the S100A8/S100A9 complex present on peripheral blood mononuclear cells to promote the conversion of naive CD4 T-cells into regulatory T-cells. Acts as an oxidized low-density lipoprotein (oxLDL) receptor in CD4 T-lymphocytes and negatively regulates the inflammatory response by inducing the expression of PDCD1 through the activation of NFAT. Participates in adipose tissue-derived mesenchymal stem cells (ASCs)-mediated protection against P.aeruginosa infection. Mechanistically, specifically recognizes P.aeruginosa to promote ERK1 activation, followed by granulocyte-macrophage colony-stimulating factor (GM-CSF) and other inflammatory cytokines secretion. In eosinophils, induces IL-10 production through the ERK1/2 pathway. Negatively regulates the chemotactic responses of effector lymphocytes and dendritic cells (DCs) to sphingosine 1 phosphate/S1P by acting as a S1PR1 receptor agonist and facilitating the internalization and degradation of the receptor. The protein is Early activation antigen CD69 (CD69) of Homo sapiens (Human).